A 375-amino-acid chain; its full sequence is Queuine tRNA-ribosyltransferase (375 aa).

Aspartate 90 functions as the Proton acceptor in the catalytic mechanism. Substrate is bound by residues 90–94 (DSGGF), aspartate 144, glutamine 190, and glycine 217. Residues 248–254 (GIGTPHY) form an RNA binding region. The active-site Nucleophile is aspartate 267. Residues 272–276 (TRIAR) form an RNA binding; important for wobble base 34 recognition region. Positions 305, 307, 310, and 336 each coordinate Zn(2+).

The protein belongs to the queuine tRNA-ribosyltransferase family. As to quaternary structure, homodimer. Within each dimer, one monomer is responsible for RNA recognition and catalysis, while the other monomer binds to the replacement base PreQ1. Zn(2+) is required as a cofactor.

It catalyses the reaction 7-aminomethyl-7-carbaguanine + guanosine(34) in tRNA = 7-aminomethyl-7-carbaguanosine(34) in tRNA + guanine. The protein operates within tRNA modification; tRNA-queuosine biosynthesis. In terms of biological role, catalyzes the base-exchange of a guanine (G) residue with the queuine precursor 7-aminomethyl-7-deazaguanine (PreQ1) at position 34 (anticodon wobble position) in tRNAs with GU(N) anticodons (tRNA-Asp, -Asn, -His and -Tyr). Catalysis occurs through a double-displacement mechanism. The nucleophile active site attacks the C1' of nucleotide 34 to detach the guanine base from the RNA, forming a covalent enzyme-RNA intermediate. The proton acceptor active site deprotonates the incoming PreQ1, allowing a nucleophilic attack on the C1' of the ribose to form the product. After dissociation, two additional enzymatic reactions on the tRNA convert PreQ1 to queuine (Q), resulting in the hypermodified nucleoside queuosine (7-(((4,5-cis-dihydroxy-2-cyclopenten-1-yl)amino)methyl)-7-deazaguanosine). The polypeptide is Queuine tRNA-ribosyltransferase (Borrelia hermsii (strain HS1 / DAH)).